We begin with the raw amino-acid sequence, 668 residues long: MKHYSIQPANLEFNAEGTPVSRDFDDVYFSNDNGLEETRYVFLGGNQLEVRFPEHPHPLFVVAESGFGTGLNFLTLWQAFDQFREAHPQARLQRLHFISFEKFPLTRADLALAHQHWPELAPWAEQLQAQWPMPLPGCHRLLLDEGRVTLDLWFGDINELTSQLDDSLNQKVDAWFLDGFAPAKNPDMWTQNLFNAMARLARPGGTLATFTSAGFVRRGLQEAGFTMQKRKGFGRKREMLCGVMEQTLPLPCSAPWFNRTGSSKREAAIIGGGIASALLSLALLRRGWQVTLYCADEAPALGASGNRQGALYPLLSKHDEALNRFFSNAFTFARRFYDQLPVKFDHDWCGVTQLGWDEKSQHKIAQMLSMDLPAELAVAVEANAVEQITGVATNCSGITYPQGGWLCPAELTRNVLELAQQQGLQIYYQYQLQNLSRKDDCWLLNFAGDQQATHSVVVLANGHQISRFSQTSTLPVYSVAGQVSHIPTTPELAELKQVLCYDGYLTPQNPANQHHCIGASYHRGSEDTAYSEDDQQQNRQRLIDCFPQAQWAKEVDVSDKEARCGVRCATRDHLPMVGNVPDYEATLVEYASLAEQKDEAVSAPVFDDLFMFAALGSRGLCSAPLCAEILAAQMSDEPIPMDASTLAALNPNRLWVRKLLKGKAVKAG.

The tract at residues 1 to 245 (MKHYSIQPAN…KREMLCGVME (245 aa)) is tRNA (mnm(5)s(2)U34)-methyltransferase. An FAD-dependent cmnm(5)s(2)U34 oxidoreductase region spans residues 270–668 (IGGGIASALL…LLKGKAVKAG (399 aa)).

This sequence in the N-terminal section; belongs to the methyltransferase superfamily. tRNA (mnm(5)s(2)U34)-methyltransferase family. In the C-terminal section; belongs to the DAO family. It depends on FAD as a cofactor.

Its subcellular location is the cytoplasm. The catalysed reaction is 5-aminomethyl-2-thiouridine(34) in tRNA + S-adenosyl-L-methionine = 5-methylaminomethyl-2-thiouridine(34) in tRNA + S-adenosyl-L-homocysteine + H(+). Functionally, catalyzes the last two steps in the biosynthesis of 5-methylaminomethyl-2-thiouridine (mnm(5)s(2)U) at the wobble position (U34) in tRNA. Catalyzes the FAD-dependent demodification of cmnm(5)s(2)U34 to nm(5)s(2)U34, followed by the transfer of a methyl group from S-adenosyl-L-methionine to nm(5)s(2)U34, to form mnm(5)s(2)U34. This Escherichia coli O9:H4 (strain HS) protein is tRNA 5-methylaminomethyl-2-thiouridine biosynthesis bifunctional protein MnmC.